The following is a 364-amino-acid chain: Selenide, water dikinase (364 aa).

Selenocysteine 25 is an active-site residue. Residue selenocysteine 25 is a non-standard amino acid, selenocysteine. Residues lysine 28, 46-48 (GYD), aspartate 66, aspartate 89, and 141-143 (GQT) contribute to the ATP site. Aspartate 48 serves as a coordination point for Mg(2+). Aspartate 89 contributes to the Mg(2+) binding site. Mg(2+) is bound at residue aspartate 244.

The protein belongs to the selenophosphate synthase 1 family. Class II subfamily. Homodimer. Mg(2+) serves as cofactor.

The catalysed reaction is hydrogenselenide + ATP + H2O = selenophosphate + AMP + phosphate + 2 H(+). Its function is as follows. Synthesizes selenophosphate from selenide and ATP. This is Selenide, water dikinase (selD) from Dictyostelium discoideum (Social amoeba).